Here is a 483-residue protein sequence, read N- to C-terminus: Uridine/cytidine kinase UKL1, chloroplastic (483 aa).

Residues 1–47 (MPEDSTAIDYVMEKASGPHFSGLRLDGLLSSPSKSSVSSPSHFRLSN) constitute a chloroplast transit peptide. Positions 59–264 (PHQPFVIGVT…IVQHIHTKLG (206 aa)) are uridine kinase. Positions 274–483 (NVFVIETTFQ…FGDRYFGTDE (210 aa)) are uracil phosphoribosyltransferase. GTP contacts are provided by residues Lys298, Arg307, and 341–344 (CKKL). 5-phospho-alpha-D-ribose 1-diphosphate contacts are provided by Arg351 and Arg376. Arg396 is a binding site for GTP. Residues Asp402, 407–410 (TGNS), and Glu473 each bind 5-phospho-alpha-D-ribose 1-diphosphate. 472–474 (GEF) provides a ligand contact to uracil.

It in the N-terminal section; belongs to the uridine kinase family. The protein in the C-terminal section; belongs to the UPRTase family.

The protein localises to the plastid. Its subcellular location is the chloroplast. It catalyses the reaction cytidine + ATP = CMP + ADP + H(+). The catalysed reaction is uridine + ATP = UMP + ADP + H(+). It participates in pyrimidine metabolism; CTP biosynthesis via salvage pathway; CTP from cytidine: step 1/3. Its pathway is pyrimidine metabolism; UMP biosynthesis via salvage pathway; UMP from uridine: step 1/1. Involved in the pyrimidine salvage pathway. Phosphorylates uridine to uridine monophosphate (UMP). Phosphorylates cytidine to cytidine monophosphate (CMP). Does not possess uracil phosphoribosyltransferase (UPRTase) activity that catalyzes the conversion of uracil and 5-phospho-alpha-D-ribose 1-diphosphate (PRPP) to UMP and diphosphate. The chain is Uridine/cytidine kinase UKL1, chloroplastic from Arabidopsis thaliana (Mouse-ear cress).